Here is a 90-residue protein sequence, read N- to C-terminus: Mitochondrial import inner membrane translocase subunit Tim9 (90 aa).

The Twin CX3C motif motif lies at 24–48; the sequence is CFNSCVNEFGSRTVSGKEESCANNC. 2 disulfide bridges follow: Cys24–Cys48 and Cys28–Cys44.

It belongs to the small Tim family. Heterohexamer; composed of 3 copies of tim-9/tin-9.1 and 3 copies of tim-10/tin-10, named soluble 70 kDa complex. The complex associates with the tim-22 component of the TIM22 complex. Interacts with multi-pass transmembrane proteins in transit.

It localises to the mitochondrion inner membrane. In terms of biological role, mitochondrial intermembrane chaperone that participates in the import and insertion of multi-pass transmembrane proteins into the mitochondrial inner membrane. May also be required for the transfer of beta-barrel precursors from the TOM complex to the sorting and assembly machinery (SAM complex) of the outer membrane. Acts as a chaperone-like protein that protects the hydrophobic precursors from aggregation and guide them through the mitochondrial intermembrane space. This chain is Mitochondrial import inner membrane translocase subunit Tim9 (tin-9.1), found in Caenorhabditis elegans.